Consider the following 644-residue polypeptide: Tubulin--tyrosine ligase-like protein 12 (644 aa).

A compositionally biased stretch (basic and acidic residues) spans 1–13; it reads MEAERGPERRPAE. The interval 1-25 is disordered; it reads MEAERGPERRPAERSSPGQTPEEGA. The TTL domain maps to 300–644; that stretch reads PHGHIFKVYT…PGGCHVTCLV (345 aa). Residues 450-453, Lys468, and Asp470 each bind ATP; that span reads SKYI.

The protein belongs to the tubulin--tyrosine ligase family. As to quaternary structure, interacts with MAVS; the interaction prevents MAVS binding to TBK1 and IKBKE. Interacts (via N-terminus) with TBK1 (via protein kinase domain). Interacts (via TTL domain) with IKBKE (via protein kinase domain). Interacts with tubulin alpha. Interacts with histone H3 and histone H4 (when trimethylated at 'Lys-20' (H4K20me3)). Interacts with CBX3. In terms of tissue distribution, expressed in the basal layer of prostate and endothelial cells. Increased expression in prostatic intraepithelial neoplasia and metastatic lesions.

The protein resides in the cytoplasm. It is found in the midbody. It localises to the cytoskeleton. Its subcellular location is the microtubule organizing center. The protein localises to the centrosome. The protein resides in the spindle. It is found in the nucleus. Its function is as follows. Negatively regulates post-translational modifications of tubulin, including detyrosination of the C-terminus and polyglutamylation of glutamate residues. Also, indirectly promotes histone H4 trimethylation at 'Lys-20' (H4K20me3). Probably by controlling tubulin and/or histone H4 post-translational modifications, plays a role in mitosis and in maintaining chromosome number stability. During RNA virus-mediated infection, acts as a negative regulator of the RIG-I pathway by preventing MAVS binding to TBK1 and IKBKE. In Homo sapiens (Human), this protein is Tubulin--tyrosine ligase-like protein 12 (TTLL12).